The chain runs to 640 residues: Putative solute carrier organic anion transporter family member 1B7 (640 aa).

The Extracellular segment spans residues 1 to 16 (MKISTTQIERRFEISS). A helical transmembrane segment spans residues 17-37 (SLVGLIDGSFEIGNLFVIVFV). At 38 to 49 (SYFGSKLHRPKL) the chain is on the cytoplasmic side. Residues 50–70 (IGIGCFLMGTGSILMALPHFF) form a helical membrane-spanning segment. At 71 to 123 (MGYYRYSKETNIDPSENSTSNLPNCLINQMLSLNRTPSEIIERGCVKESGSHM) the chain is on the extracellular side. Residues 124–144 (WIYVFMGNMLRGIGETPIVPL) form a helical membrane-spanning segment. The Cytoplasmic segment spans residues 145–159 (GISYIDDFAKEGHSS). Residues 160 to 180 (LYLGTVNVMGMTGLVFAFMLG) traverse the membrane as a helical segment. The Extracellular segment spans residues 181–211 (SLFAKMYVDIGYVDLSTIRITPKDSRWVGAW). A helical membrane pass occupies residues 212–232 (WLGFLVSGIVSIISSIPFFFL). Topologically, residues 233–292 (PLNPNKPQKERKVSLFLHVLKTNDKRNQIANLTNRRKYITKNVTGFFQSLKSILTNPLYV) are cytoplasmic. The residue at position 246 (serine 246) is a Phosphoserine. Residues 293 to 313 (IFVIFTLLHMSSYIASLTYII) form a helical membrane-spanning segment. Topologically, residues 314–329 (KMVEQQYGWSASKTNF) are extracellular. Residues 330–350 (LLGVLALPAVAIGMFSGGYII) form a helical membrane-spanning segment. The Cytoplasmic segment spans residues 351–362 (KKFKLSLVGLAK). The helical transmembrane segment at 363-383 (LAFCSATVHLLSQVLYFFLIC) threads the bilayer. Topologically, residues 384–492 (ESKSVAGLTL…CTRKSYVYFV (109 aa)) are extracellular. Residues 406-461 (DVPLSYCNSECNCDESQWEPVCGNNGITYLSPCLAGCKSSSGNKEPIVFYNCSCVE) form the Kazal-like domain. Disulfide bonds link cysteine 412–cysteine 442, cysteine 418–cysteine 438, and cysteine 427–cysteine 459. Residues 493–513 (IQVLDAFLCAVGLTSYSVLVI) traverse the membrane as a helical segment. The Cytoplasmic segment spans residues 514-521 (RIVQPELK). Residues 522–542 (ALAIGFHSMIMRSLGGILVPI) form a helical membrane-spanning segment. Topologically, residues 543–577 (YFGALIDTTCMKWSTNSCGARGACRIYNSTYLGRA) are extracellular. A helical transmembrane segment spans residues 578-598 (FFGLKVALIFPVLVLLTVFIF). The Cytoplasmic portion of the chain corresponds to 599–640 (VVRKKSHGKDTKVLENERQVMDEANLEFLNDSEHFVPSAEEQ). Serine 636 carries the phosphoserine modification.

This sequence belongs to the organo anion transporter (TC 2.A.60) family.

It localises to the cell membrane. The protein is Putative solute carrier organic anion transporter family member 1B7 (SLCO1B7) of Homo sapiens (Human).